We begin with the raw amino-acid sequence, 194 residues long: RNA polymerase II subunit A C-terminal domain phosphatase SSU72 like protein 4 (194 aa).

It belongs to the SSU72 phosphatase family.

Its subcellular location is the nucleus. It carries out the reaction O-phospho-L-seryl-[protein] + H2O = L-seryl-[protein] + phosphate. The catalysed reaction is O-phospho-L-threonyl-[protein] + H2O = L-threonyl-[protein] + phosphate. Protein phosphatase that catalyzes the dephosphorylation of the C-terminal domain of RNA polymerase II. Plays a role in RNA processing and termination. The polypeptide is RNA polymerase II subunit A C-terminal domain phosphatase SSU72 like protein 4 (Homo sapiens (Human)).